A 791-amino-acid polypeptide reads, in one-letter code: Penicillin-binding protein 1A (791 aa).

Topologically, residues 1-6 are cytoplasmic; that stretch reads MYKSLF. The helical; Signal-anchor for type II membrane protein transmembrane segment at 7-27 threads the bilayer; it reads FCLKILALLFLIGCGIVAYII. The Periplasmic portion of the chain corresponds to 28–791; the sequence is YYYSRDLPDY…TEKDQSQEIY (764 aa). The tract at residues 49–220 is transglycosylase; the sequence is TRIYSRDGKL…SELNPEKNYA (172 aa). The Proton donor; for transglycosylase activity role is filled by E87. The interval 398–711 is transpeptidase; it reads DVIVVEPVKD…SSVVLPIFID (314 aa). S457 acts as the Acyl-ester intermediate; for transpeptidase activity in catalysis.

In the N-terminal section; belongs to the glycosyltransferase 51 family. It in the C-terminal section; belongs to the transpeptidase family.

Its subcellular location is the cell inner membrane. It catalyses the reaction [GlcNAc-(1-&gt;4)-Mur2Ac(oyl-L-Ala-gamma-D-Glu-L-Lys-D-Ala-D-Ala)](n)-di-trans,octa-cis-undecaprenyl diphosphate + beta-D-GlcNAc-(1-&gt;4)-Mur2Ac(oyl-L-Ala-gamma-D-Glu-L-Lys-D-Ala-D-Ala)-di-trans,octa-cis-undecaprenyl diphosphate = [GlcNAc-(1-&gt;4)-Mur2Ac(oyl-L-Ala-gamma-D-Glu-L-Lys-D-Ala-D-Ala)](n+1)-di-trans,octa-cis-undecaprenyl diphosphate + di-trans,octa-cis-undecaprenyl diphosphate + H(+). It carries out the reaction Preferential cleavage: (Ac)2-L-Lys-D-Ala-|-D-Ala. Also transpeptidation of peptidyl-alanyl moieties that are N-acyl substituents of D-alanine.. Its pathway is cell wall biogenesis; peptidoglycan biosynthesis. Functionally, cell wall formation. Synthesis of cross-linked peptidoglycan from the lipid intermediates. The enzyme has a penicillin-insensitive transglycosylase N-terminal domain (formation of linear glycan strands) and a penicillin-sensitive transpeptidase C-terminal domain (cross-linking of the peptide subunits). This is Penicillin-binding protein 1A (mrcA) from Rickettsia bellii (strain RML369-C).